A 179-amino-acid polypeptide reads, in one-letter code: Acireductone dioxygenase (179 aa).

Fe(2+)-binding residues include histidine 99, histidine 101, glutamate 105, and histidine 143. 4 residues coordinate Ni(2+): histidine 99, histidine 101, glutamate 105, and histidine 143.

The protein belongs to the acireductone dioxygenase (ARD) family. In terms of assembly, monomer. It depends on Fe(2+) as a cofactor. Ni(2+) is required as a cofactor.

The enzyme catalyses 1,2-dihydroxy-5-(methylsulfanyl)pent-1-en-3-one + O2 = 3-(methylsulfanyl)propanoate + CO + formate + 2 H(+). It catalyses the reaction 1,2-dihydroxy-5-(methylsulfanyl)pent-1-en-3-one + O2 = 4-methylsulfanyl-2-oxobutanoate + formate + 2 H(+). Its pathway is amino-acid biosynthesis; L-methionine biosynthesis via salvage pathway; L-methionine from S-methyl-5-thio-alpha-D-ribose 1-phosphate: step 5/6. Its function is as follows. Catalyzes 2 different reactions between oxygen and the acireductone 1,2-dihydroxy-3-keto-5-methylthiopentene (DHK-MTPene) depending upon the metal bound in the active site. Fe-containing acireductone dioxygenase (Fe-ARD) produces formate and 2-keto-4-methylthiobutyrate (KMTB), the alpha-ketoacid precursor of methionine in the methionine recycle pathway. Ni-containing acireductone dioxygenase (Ni-ARD) produces methylthiopropionate, carbon monoxide and formate, and does not lie on the methionine recycle pathway. The chain is Acireductone dioxygenase from Sulfurihydrogenibium sp. (strain YO3AOP1).